The sequence spans 334 residues: Ornithine carbamoyltransferase (334 aa).

Residues 57 to 60 (STRT), Q84, R108, and 135 to 138 (HPTQ) contribute to the carbamoyl phosphate site. L-ornithine-binding positions include N169, D233, and 237 to 238 (SM). Residues 275-276 (CL) and R320 contribute to the carbamoyl phosphate site.

It belongs to the aspartate/ornithine carbamoyltransferase superfamily. OTCase family.

The protein localises to the cytoplasm. The catalysed reaction is carbamoyl phosphate + L-ornithine = L-citrulline + phosphate + H(+). It participates in amino-acid biosynthesis; L-arginine biosynthesis; L-arginine from L-ornithine and carbamoyl phosphate: step 1/3. Functionally, reversibly catalyzes the transfer of the carbamoyl group from carbamoyl phosphate (CP) to the N(epsilon) atom of ornithine (ORN) to produce L-citrulline. The sequence is that of Ornithine carbamoyltransferase from Aliivibrio fischeri (strain ATCC 700601 / ES114) (Vibrio fischeri).